Consider the following 470-residue polypeptide: uncharacterized protein (470 aa).

The HTH gntR-type domain occupies 1–69; the sequence is MTRYQHLATL…PRSGYFVAQR (69 aa). Residue Lys313 is modified to N6-(pyridoxal phosphate)lysine.

In the C-terminal section; belongs to the class-I pyridoxal-phosphate-dependent aminotransferase family.

This is an uncharacterized protein from Escherichia coli (strain K12).